The following is a 118-amino-acid chain: Large ribosomal subunit protein uL18 (118 aa).

The protein belongs to the universal ribosomal protein uL18 family. As to quaternary structure, part of the 50S ribosomal subunit; part of the 5S rRNA/L5/L18/L25 subcomplex. Contacts the 5S and 23S rRNAs.

Functionally, this is one of the proteins that bind and probably mediate the attachment of the 5S RNA into the large ribosomal subunit, where it forms part of the central protuberance. This is Large ribosomal subunit protein uL18 from Ligilactobacillus salivarius (strain UCC118) (Lactobacillus salivarius).